We begin with the raw amino-acid sequence, 106 residues long: Trp operon repressor homolog (106 aa).

A DNA-binding region spans residues glutamine 59–isoleucine 82.

It belongs to the TrpR family. Homodimer.

The protein localises to the cytoplasm. This protein is an aporepressor. When complexed with L-tryptophan it binds the operator region of the trp operon and prevents the initiation of transcription. The polypeptide is Trp operon repressor homolog (Histophilus somni (strain 2336) (Haemophilus somnus)).